A 164-amino-acid chain; its full sequence is HTH-type transcriptional regulator IscR (164 aa).

In terms of domain architecture, HTH rrf2-type spans 2-131 (RLTSKGRYAV…NNITLDELVN (130 aa)). Residues 28-51 (LADISERQGISLSYLEQLFSRLRK) constitute a DNA-binding region (H-T-H motif). 3 residues coordinate [2Fe-2S] cluster: C92, C98, and C104.

Requires [2Fe-2S] cluster as cofactor.

Its function is as follows. Regulates the transcription of several operons and genes involved in the biogenesis of Fe-S clusters and Fe-S-containing proteins. The chain is HTH-type transcriptional regulator IscR from Pectobacterium atrosepticum (strain SCRI 1043 / ATCC BAA-672) (Erwinia carotovora subsp. atroseptica).